The primary structure comprises 589 residues: (E)-beta-ocimene synthase, chloroplastic (589 aa).

A chloroplast-targeting transit peptide spans 1–25 (MAAHNLCFNSAFVCNVHHQKTQHFP). Residues Arg302, Asp339, Asp343, Arg480, and Asn483 each contribute to the (2E,6E)-farnesyl diphosphate site. 2 residues coordinate Mg(2+): Asp339 and Asp343. The DDXXD motif motif lies at 339-343 (DDIYD). The Mg(2+) site is built by Asn483, Thr487, and Glu491.

This sequence belongs to the terpene synthase family. Tpsb subfamily. Mg(2+) is required as a cofactor. Requires Mn(2+) as cofactor. As to expression, expressed exclusively in flowers.

Its subcellular location is the plastid. It is found in the chloroplast. The enzyme catalyses (2E,6E)-farnesyl diphosphate = (3E,6E)-alpha-farnesene + diphosphate. It functions in the pathway secondary metabolite biosynthesis; terpenoid biosynthesis. In terms of biological role, predominantly involved in monoterpene (C10) biosynthesis. Using GPP as substrate, the major product is (E)-beta-ocimene with minor amounts of (Z)-beta-ocimene and myrcene. Using FPP as substrate, could also be able to synthesize in vitro sesquiterpenes (C15) with (E,E)-alpha-farnesene as the major product and with (Z,E)-alpha-farnesene and (E,E)-beta-farnesene as minor products. This is (E)-beta-ocimene synthase, chloroplastic (TPS02) from Arabidopsis thaliana (Mouse-ear cress).